Reading from the N-terminus, the 255-residue chain is Receptor expression-enhancing protein 3 (255 aa).

3 consecutive transmembrane segments (helical) span residues 1–21, 35–55, and 59–79; these read MVSWMISRAVVLVFGMLYPAY, YVRWMMYWIVFALYTVIETVA, and VAWFPLYYELKIAFVIWLLSP. The tract at residues 158 to 242 is disordered; the sequence is TIQGDEPVGQ…KGRKEVRYGS (85 aa). Thr-201 is modified (phosphothreonine). At Ser-210 the chain carries Phosphoserine. Residues 222 to 231 are compositionally biased toward polar residues; the sequence is RSQSMKSVKT.

It belongs to the DP1 family. In terms of tissue distribution, expressed in circumvallate papillae.

It localises to the endoplasmic reticulum membrane. Functionally, microtubule-binding protein required to ensure proper cell division and nuclear envelope reassembly by sequestering the endoplasmic reticulum away from chromosomes during mitosis. Probably acts by clearing the endoplasmic reticulum membrane from metaphase chromosomes. In Homo sapiens (Human), this protein is Receptor expression-enhancing protein 3 (REEP3).